The chain runs to 614 residues: 1-deoxy-D-xylulose-5-phosphate synthase (614 aa).

Thiamine diphosphate is bound by residues H74 and 115 to 117; that span reads AHS. Mg(2+) is bound at residue D146. Residues 147-148, N175, Y282, and E363 each bind thiamine diphosphate; that span reads GA. Position 175 (N175) interacts with Mg(2+).

The protein belongs to the transketolase family. DXPS subfamily. In terms of assembly, homodimer. Mg(2+) is required as a cofactor. Thiamine diphosphate serves as cofactor.

It catalyses the reaction D-glyceraldehyde 3-phosphate + pyruvate + H(+) = 1-deoxy-D-xylulose 5-phosphate + CO2. It participates in metabolic intermediate biosynthesis; 1-deoxy-D-xylulose 5-phosphate biosynthesis; 1-deoxy-D-xylulose 5-phosphate from D-glyceraldehyde 3-phosphate and pyruvate: step 1/1. Catalyzes the acyloin condensation reaction between C atoms 2 and 3 of pyruvate and glyceraldehyde 3-phosphate to yield 1-deoxy-D-xylulose-5-phosphate (DXP). The protein is 1-deoxy-D-xylulose-5-phosphate synthase of Nitrosospira multiformis (strain ATCC 25196 / NCIMB 11849 / C 71).